Here is a 450-residue protein sequence, read N- to C-terminus: 23S rRNA (uracil(1939)-C(5))-methyltransferase RlmD (450 aa).

The TRAM domain occupies 12–70 (SKQLSAKLSLNVDQLDHLGAGIAQYQGKVVFIPGALPDETVTVQLTEQKKNYARAKLIK). The [4Fe-4S] cluster site is built by Cys-83, Cys-89, Cys-92, and Cys-171. S-adenosyl-L-methionine-binding residues include Gln-283, Phe-312, Asn-317, Glu-333, Asp-360, and Asp-380. Cys-406 acts as the Nucleophile in catalysis.

It belongs to the class I-like SAM-binding methyltransferase superfamily. RNA M5U methyltransferase family. RlmD subfamily.

It catalyses the reaction uridine(1939) in 23S rRNA + S-adenosyl-L-methionine = 5-methyluridine(1939) in 23S rRNA + S-adenosyl-L-homocysteine + H(+). Functionally, catalyzes the formation of 5-methyl-uridine at position 1939 (m5U1939) in 23S rRNA. The sequence is that of 23S rRNA (uracil(1939)-C(5))-methyltransferase RlmD from Shewanella putrefaciens (strain CN-32 / ATCC BAA-453).